A 240-amino-acid polypeptide reads, in one-letter code: Protein OXIDATIVE STRESS 3 LIKE 4 (240 aa).

The disordered stretch occupies residues 1 to 128 (MELMAKPTFS…SKSFGNLGEI (128 aa)). Polar residues predominate over residues 51 to 66 (WSGQTADYSSDSSSIG). Acidic residues predominate over residues 70 to 84 (DSEEDEEESENENDD). Residues 142–150 (NKRRRLQIC) carry the Nuclear localization signal motif. A disordered region spans residues 163–207 (NPKSMPLLPVNEDEDDDDEDDDEEDLKSGFDENKSSSDEEGVKKV). The span at 173-187 (NEDEDDDDEDDDEED) shows a compositional bias: acidic residues. The span at 188 to 205 (LKSGFDENKSSSDEEGVK) shows a compositional bias: basic and acidic residues. Residues 202-229 (EGVKKVVVRKGSFKNRAYKSRSCFALSD) are kinase-inducible domain (KID). A Phosphoserine modification is found at Ser213.

In terms of assembly, interacts with HDA19; Ser-213 is critical for this interaction.

It is found in the nucleus. Functionally, transcription activator which may regulates gene expression through interaction with the histone deacetylase HDA19. Promotes slightly the tolerance to cadmium (Cd) and to oxidizing chemicals (e.g. diamide and tert-butyl hydroperoxide (t-BOOH)). The protein is Protein OXIDATIVE STRESS 3 LIKE 4 of Arabidopsis thaliana (Mouse-ear cress).